The following is a 274-amino-acid chain: MQAILSSWFIQGMIKATSDMWHKGWDERNGGNISLRLLAEEVEPYRRDFYQQPRKVELTQPAPELANSWFLVTGSGKFFRNVELNPAENLVLLQVSNDGMAYHIHWGLTQGGLPTSELAAHFQSHIVRMQVSGGTNRVIMHCHATNLIALSYVQKLENASFTRLLWEGSTECLVVFPDGIGIVPWMVPGTDGIGTQTAEQMREHSLVLWPFHGIFGSGPTLDDAFGLIDTAEKSAEIMVKVLSMGGKKQTISREQLIALAARFDVTPMAAALDA.

Residue Glu-117 is part of the active site. His-141, His-143, and His-212 together coordinate Zn(2+).

The protein belongs to the aldolase class II family. RhaD subfamily. Homotetramer. Requires Zn(2+) as cofactor.

The protein localises to the cytoplasm. It carries out the reaction L-rhamnulose 1-phosphate = (S)-lactaldehyde + dihydroxyacetone phosphate. It functions in the pathway carbohydrate degradation; L-rhamnose degradation; glycerone phosphate from L-rhamnose: step 3/3. In terms of biological role, catalyzes the reversible cleavage of L-rhamnulose-1-phosphate to dihydroxyacetone phosphate (DHAP) and L-lactaldehyde. The polypeptide is Rhamnulose-1-phosphate aldolase (Yersinia pestis).